Here is a 533-residue protein sequence, read N- to C-terminus: T-complex protein 1 subunit delta (533 aa).

The tract at residues 1–26 (MSAPAAAPAKVLPSRSDFDEKEKEKD) is disordered. The segment covering 16–26 (SDFDEKEKEKD) has biased composition (basic and acidic residues).

It belongs to the TCP-1 chaperonin family. Heterooligomeric complex of about 850 to 900 kDa that forms two stacked rings, 12 to 16 nm in diameter.

The protein resides in the cytoplasm. Its function is as follows. Molecular chaperone; assists the folding of proteins upon ATP hydrolysis. Known to play a role, in vitro, in the folding of actin and tubulin. In Dictyostelium discoideum (Social amoeba), this protein is T-complex protein 1 subunit delta (cct4).